Consider the following 432-residue polypeptide: Adenylosuccinate lyase (432 aa).

N(6)-(1,2-dicarboxyethyl)-AMP contacts are provided by residues 4-5 (RY), 67-69 (RHD), and 93-94 (TS). His141 serves as the catalytic Proton donor/acceptor. Gln212 is a binding site for N(6)-(1,2-dicarboxyethyl)-AMP. Ser262 acts as the Proton donor/acceptor in catalysis. N(6)-(1,2-dicarboxyethyl)-AMP is bound by residues Ser263, 268 to 270 (KRN), Asn276, and 307 to 311 (SAERI).

This sequence belongs to the lyase 1 family. Adenylosuccinate lyase subfamily. Homodimer and homotetramer. Residues from neighboring subunits contribute catalytic and substrate-binding residues to each active site.

The catalysed reaction is N(6)-(1,2-dicarboxyethyl)-AMP = fumarate + AMP. It carries out the reaction (2S)-2-[5-amino-1-(5-phospho-beta-D-ribosyl)imidazole-4-carboxamido]succinate = 5-amino-1-(5-phospho-beta-D-ribosyl)imidazole-4-carboxamide + fumarate. It functions in the pathway purine metabolism; AMP biosynthesis via de novo pathway; AMP from IMP: step 2/2. It participates in purine metabolism; IMP biosynthesis via de novo pathway; 5-amino-1-(5-phospho-D-ribosyl)imidazole-4-carboxamide from 5-amino-1-(5-phospho-D-ribosyl)imidazole-4-carboxylate: step 2/2. In terms of biological role, catalyzes two reactions in de novo purine nucleotide biosynthesis. Catalyzes the breakdown of 5-aminoimidazole- (N-succinylocarboxamide) ribotide (SAICAR or 2-[5-amino-1-(5-phospho-beta-D-ribosyl)imidazole-4-carboxamido]succinate) to 5-aminoimidazole-4-carboxamide ribotide (AICAR or 5-amino-1-(5-phospho-beta-D-ribosyl)imidazole-4-carboxamide) and fumarate, and of adenylosuccinate (ADS or N(6)-(1,2-dicarboxyethyl)-AMP) to adenosine monophosphate (AMP) and fumarate. The chain is Adenylosuccinate lyase (purB) from Streptococcus mutans serotype c (strain ATCC 700610 / UA159).